The sequence spans 380 residues: Alanine racemase (380 aa).

The active-site Proton acceptor; specific for D-alanine is the K34. K34 bears the N6-(pyridoxal phosphate)lysine mark. Position 135 (R135) interacts with substrate. Catalysis depends on Y267, which acts as the Proton acceptor; specific for L-alanine. Residue M315 participates in substrate binding.

This sequence belongs to the alanine racemase family. Pyridoxal 5'-phosphate is required as a cofactor.

The enzyme catalyses L-alanine = D-alanine. The protein operates within amino-acid biosynthesis; D-alanine biosynthesis; D-alanine from L-alanine: step 1/1. In terms of biological role, catalyzes the interconversion of L-alanine and D-alanine. May also act on other amino acids. This is Alanine racemase (alr) from Lawsonia intracellularis (strain PHE/MN1-00).